Reading from the N-terminus, the 121-residue chain is UPF0102 protein BT_2236 (121 aa).

It belongs to the UPF0102 family.

The sequence is that of UPF0102 protein BT_2236 from Bacteroides thetaiotaomicron (strain ATCC 29148 / DSM 2079 / JCM 5827 / CCUG 10774 / NCTC 10582 / VPI-5482 / E50).